Reading from the N-terminus, the 706-residue chain is Amino-acid acetyltransferase, mitochondrial (706 aa).

Disordered stretches follow at residues 1–25 (MSSR…GAGD) and 367–403 (NPAN…PAKQ). The transit peptide at 1 to 35 (MSSRVLASRAAQPLKRHPTVVGAGDEAYPTPRRCF) directs the protein to the mitochondrion. Residues 367–388 (NPANNSQGESVVTNPISDSNAV) show a composition bias toward polar residues. Positions 389–401 (SESASTEPTSTPA) are enriched in low complexity. The 170-residue stretch at 527-696 (TRPNMNLDDP…YEAVCRSIQP (170 aa)) folds into the N-acetyltransferase domain.

It belongs to the acetyltransferase family.

Its subcellular location is the mitochondrion. The enzyme catalyses L-glutamate + acetyl-CoA = N-acetyl-L-glutamate + CoA + H(+). Its pathway is amino-acid biosynthesis; L-arginine biosynthesis; N(2)-acetyl-L-ornithine from L-glutamate: step 1/4. Its function is as follows. N-acetylglutamate synthase involved in arginine biosynthesis. In Emericella nidulans (strain FGSC A4 / ATCC 38163 / CBS 112.46 / NRRL 194 / M139) (Aspergillus nidulans), this protein is Amino-acid acetyltransferase, mitochondrial (arg2).